Reading from the N-terminus, the 266-residue chain is 3-methyl-2-oxobutanoate hydroxymethyltransferase (266 aa).

D45 and D84 together coordinate Mg(2+). Residues 45 to 46 (DS), D84, and K113 each bind 3-methyl-2-oxobutanoate. Residue E115 participates in Mg(2+) binding. E183 functions as the Proton acceptor in the catalytic mechanism.

It belongs to the PanB family. Homodecamer; pentamer of dimers. It depends on Mg(2+) as a cofactor.

It is found in the cytoplasm. The catalysed reaction is 3-methyl-2-oxobutanoate + (6R)-5,10-methylene-5,6,7,8-tetrahydrofolate + H2O = 2-dehydropantoate + (6S)-5,6,7,8-tetrahydrofolate. It functions in the pathway cofactor biosynthesis; (R)-pantothenate biosynthesis; (R)-pantoate from 3-methyl-2-oxobutanoate: step 1/2. Functionally, catalyzes the reversible reaction in which hydroxymethyl group from 5,10-methylenetetrahydrofolate is transferred onto alpha-ketoisovalerate to form ketopantoate. This Coxiella burnetii (strain CbuG_Q212) (Coxiella burnetii (strain Q212)) protein is 3-methyl-2-oxobutanoate hydroxymethyltransferase.